We begin with the raw amino-acid sequence, 274 residues long: Pyridoxal phosphate homeostasis protein (274 aa).

S6 carries the phosphoserine modification. At K47 the chain carries N6-(pyridoxal phosphate)lysine. Residue Y69 is modified to Phosphotyrosine. K125 bears the N6-succinyllysine mark. Phosphoserine occurs at positions 226 and 244.

Belongs to the pyridoxal phosphate-binding protein YggS/PROSC family.

Pyridoxal 5'-phosphate (PLP)-binding protein, which may be involved in intracellular homeostatic regulation of pyridoxal 5'-phosphate (PLP), the active form of vitamin B6. This Mus musculus (Mouse) protein is Pyridoxal phosphate homeostasis protein.